The chain runs to 1436 residues: Antigen WC1.1 (1436 aa).

Residues 1–25 form the signal peptide; sequence MALGRHLSLRGLCVLLLGTMVGGQA. 3 SRCR domains span residues 28 to 131, 134 to 234, and 239 to 340; these read LRLK…VVCS, VRLA…VVCS, and VRLM…VICS. Disulfide bonds link Cys66–Cys130 and Cys97–Cys107. Asn162 carries an N-linked (GlcNAc...) asparagine glycan. 2 disulfides stabilise this stretch: Cys172–Cys233 and Cys203–Cys213. N-linked (GlcNAc...) asparagine glycans are attached at residues Asn244 and Asn256. Intrachain disulfides connect Cys265–Cys329, Cys278–Cys339, and Cys309–Cys319. 3 N-linked (GlcNAc...) asparagine glycosylation sites follow: Asn351, Asn424, and Asn444. 5 SRCR domains span residues 376 to 476, 481 to 581, 586 to 686, 689 to 789, and 794 to 895; these read LRLV…VICS, LRMV…IWCA, IRLV…VICS, VRLA…VVCS, and VQLM…VICS. 3 disulfide bridges follow: Cys401-Cys465, Cys414-Cys475, and Cys445-Cys455. Residues Asn499 and Asn531 are each glycosylated (N-linked (GlcNAc...) asparagine). Cystine bridges form between Cys506–Cys570, Cys519–Cys580, Cys550–Cys560, Cys611–Cys675, Cys624–Cys685, and Cys655–Cys665. The N-linked (GlcNAc...) asparagine glycan is linked to Asn717. Disulfide bonds link Cys727-Cys788 and Cys758-Cys768. The N-linked (GlcNAc...) asparagine glycan is linked to Asn799. 3 cysteine pairs are disulfide-bonded: Cys820-Cys884, Cys833-Cys894, and Cys864-Cys874. N-linked (GlcNAc...) asparagine glycans are attached at residues Asn897, Asn979, and Asn999. SRCR domains lie at 931–1031, 1036–1136, and 1155–1255; these read LRLV…VICS, LRMV…ISCE, and LRLR…VRCS. 3 disulfides stabilise this stretch: Cys956/Cys1020, Cys969/Cys1030, and Cys1000/Cys1010. Residues Asn1054 and Asn1086 are each glycosylated (N-linked (GlcNAc...) asparagine). 3 disulfide bridges follow: Cys1061-Cys1125, Cys1074-Cys1135, and Cys1105-Cys1115. Asn1173 and Asn1214 each carry an N-linked (GlcNAc...) asparagine glycan. Intrachain disulfides connect Cys1180–Cys1244, Cys1193–Cys1254, and Cys1224–Cys1234. Residues 1337–1410 are disordered; the sequence is EGLGSPDQMT…PGEGEESFWL (74 aa). Over residues 1348–1358 the composition is skewed to acidic residues; the sequence is VPDENYDDAEE. The segment covering 1384–1393 has biased composition (polar residues); the sequence is RSSQTGSFLN. An N-linked (GlcNAc...) asparagine glycan is attached at Asn1393.

In terms of tissue distribution, expressed on subsets of CD4-CD8- gamma delta T lymphocytes.

The protein localises to the secreted. This Bos taurus (Bovine) protein is Antigen WC1.1.